The primary structure comprises 471 residues: UDP-glycosyltransferase 1 (471 aa).

The active-site Proton acceptor is His15. Residue His15 coordinates an anthocyanidin. The active-site Charge relay is Asp124. Positions 146, 348, 350, 365, 368, 369, 370, and 373 each coordinate UDP-alpha-D-glucose. Position 388 (Ala388) interacts with an anthocyanidin. Glu389 and Gln390 together coordinate UDP-alpha-D-glucose.

Belongs to the UDP-glycosyltransferase family. As to expression, expressed in roots. Detected in stems and leaves.

The catalysed reaction is a 7-hydroxyisoflavone + UDP-alpha-D-glucose = a 7-hydroxyisoflavone 7-O-beta-D-glucoside + UDP + H(+). In terms of biological role, isoflavone 7-O-glucosyltransferase converting daidzein to daidzin, genistein to genistin and formononetin to ononin. Shows some activity toward the chalcone isoliquiritigenin, the flavanones liquiritigenin and naringenin, and the flavone apigenin, but not toward cyanidin, luteolin, kaempferol, quercetin, daidzin and puerarin. The polypeptide is UDP-glycosyltransferase 1 (Pueraria montana var. lobata (Kudzu vine)).